The following is a 217-amino-acid chain: 3,4-dihydroxy-2-butanone 4-phosphate synthase (217 aa).

Residues 37-38 (RE), Asp-42, 150-154 (RGGHT), and Glu-174 contribute to the D-ribulose 5-phosphate site. Glu-38 provides a ligand contact to Mg(2+). His-153 provides a ligand contact to Mg(2+).

Belongs to the DHBP synthase family. As to quaternary structure, homodimer. It depends on Mg(2+) as a cofactor. Mn(2+) is required as a cofactor.

The enzyme catalyses D-ribulose 5-phosphate = (2S)-2-hydroxy-3-oxobutyl phosphate + formate + H(+). The protein operates within cofactor biosynthesis; riboflavin biosynthesis; 2-hydroxy-3-oxobutyl phosphate from D-ribulose 5-phosphate: step 1/1. Functionally, catalyzes the conversion of D-ribulose 5-phosphate to formate and 3,4-dihydroxy-2-butanone 4-phosphate. This chain is 3,4-dihydroxy-2-butanone 4-phosphate synthase, found in Salmonella paratyphi A (strain ATCC 9150 / SARB42).